Here is a 690-residue protein sequence, read N- to C-terminus: Glycine--tRNA ligase beta subunit (690 aa).

Belongs to the class-II aminoacyl-tRNA synthetase family. In terms of assembly, tetramer of two alpha and two beta subunits.

It is found in the cytoplasm. It carries out the reaction tRNA(Gly) + glycine + ATP = glycyl-tRNA(Gly) + AMP + diphosphate. The protein is Glycine--tRNA ligase beta subunit of Pediococcus pentosaceus (strain ATCC 25745 / CCUG 21536 / LMG 10740 / 183-1w).